The chain runs to 532 residues: 2,3-bisphosphoglycerate-independent phosphoglycerate mutase (532 aa).

The Mn(2+) site is built by Asp15 and Ser65. Ser65 serves as the catalytic Phosphoserine intermediate. Substrate contacts are provided by residues His126, 156–157, Arg188, Arg194, 258–261, and Lys331; these read RD and RPDR. Mn(2+) is bound by residues Asp398, His402, Asp439, His440, and His457.

It belongs to the BPG-independent phosphoglycerate mutase family. In terms of assembly, monomer. Requires Mn(2+) as cofactor.

It catalyses the reaction (2R)-2-phosphoglycerate = (2R)-3-phosphoglycerate. It participates in carbohydrate degradation; glycolysis; pyruvate from D-glyceraldehyde 3-phosphate: step 3/5. Its function is as follows. Catalyzes the interconversion of 2-phosphoglycerate and 3-phosphoglycerate. This Trichodesmium erythraeum (strain IMS101) protein is 2,3-bisphosphoglycerate-independent phosphoglycerate mutase.